Here is a 576-residue protein sequence, read N- to C-terminus: Apolipoprotein N-acyltransferase 1 (576 aa).

The next 7 helical transmembrane spans lie at 15–35, 38–58, 60–80, 92–112, 128–148, 168–188, and 204–224; these read LILC…FSFF, GVFA…TSIW, AFLW…YWIP, FVSI…FFLF, YILL…FQIF, ICGV…FLIL, and IASL…IGYI. The 303-residue stretch at 236-538 folds into the CN hydrolase domain; the sequence is LSVLMIQPDT…TGTRAFSIRL (303 aa). Glutamate 285 acts as the Proton acceptor in catalysis. The active site involves lysine 355. The Nucleophile role is filled by cysteine 446. Residues 549 to 569 form a helical membrane-spanning segment; it reads FGNSFLWIFCILILISRLIFV.

The protein belongs to the CN hydrolase family. Apolipoprotein N-acyltransferase subfamily.

Its subcellular location is the cell inner membrane. It catalyses the reaction N-terminal S-1,2-diacyl-sn-glyceryl-L-cysteinyl-[lipoprotein] + a glycerophospholipid = N-acyl-S-1,2-diacyl-sn-glyceryl-L-cysteinyl-[lipoprotein] + a 2-acyl-sn-glycero-3-phospholipid + H(+). It functions in the pathway protein modification; lipoprotein biosynthesis (N-acyl transfer). Its function is as follows. Catalyzes the phospholipid dependent N-acylation of the N-terminal cysteine of apolipoprotein, the last step in lipoprotein maturation. In Leptospira interrogans serogroup Icterohaemorrhagiae serovar Lai (strain 56601), this protein is Apolipoprotein N-acyltransferase 1.